The following is a 207-amino-acid chain: dTTP/UTP pyrophosphatase (207 aa).

The active-site Proton acceptor is Asp87.

This sequence belongs to the Maf family. YhdE subfamily. The cofactor is a divalent metal cation.

Its subcellular location is the cytoplasm. It carries out the reaction dTTP + H2O = dTMP + diphosphate + H(+). The catalysed reaction is UTP + H2O = UMP + diphosphate + H(+). Its function is as follows. Nucleoside triphosphate pyrophosphatase that hydrolyzes dTTP and UTP. May have a dual role in cell division arrest and in preventing the incorporation of modified nucleotides into cellular nucleic acids. In Bordetella bronchiseptica (strain ATCC BAA-588 / NCTC 13252 / RB50) (Alcaligenes bronchisepticus), this protein is dTTP/UTP pyrophosphatase.